The primary structure comprises 157 residues: Myosin regulatory light chain, striated adductor muscle (157 aa).

EF-hand domains are found at residues 16–51 (KQIQ…LGRA) and 85–120 (DSEE…MGDN). The Ca(2+) site is built by Asp-29, Asp-31, Asp-33, and Asp-40.

In molluscan muscle, calcium regulation is associated with myosin rather than with actin. Muscle myosin contains two types of light chains: the catalytic light chain, essential for ATPase activity, and the regulatory light chain, a calcium-binding protein responsible for Ca(2+) dependent binding and Ca(2+) dependent Mg-ATPase activity. In Argopecten irradians (Bay scallop), this protein is Myosin regulatory light chain, striated adductor muscle.